The chain runs to 602 residues: MAAAAAVAKSVEAGGEPGGGGGGAWSTVSRSGRSSYSAGGGVGGGKVGELAEGLAGVEIGGERRLDKYDIPVEVSGEDVPPPADGFEAAGLVEAVLRNVARCGYESPTPVQRYSMPIALAGRDLMACAQTGSGKTAAFCLPVVSGLVAAGGSGIGHRERSSFNRAAAKPRALVLAPTRELAAQINEEAKKFSFQTGLRVVVAYGGTPMYNQLRDLERGADILVATPGRLVDMVERSKVSLEAIKYLVMDEADRMLDMGFEPQIRKIVERMNMPRKSVRQTMLFSATFPPEIQRLASDFLSNYIFITVGRVGSSTDLIMQKVELLSDGEKRGYLLDLLQRQSVGVANSKLQQPLTLVFVETKREADSLRYWLYSKGFPATAIHGDRTQQERESALRSFKTGLTPIMVATDVASRGLDVPNVAHVINYDLPKSIEDYVHRIGRTGRAGKAGSATAFFTESDHSLAKGLLELMTEAKQDVPDWLVQYAERPYYGGSSYGGRNRRSGGGGNRFAGRDFRQGSGGGYSGGGGGGGYSGGGGGGGYSGGGGGYSGGGRGGGYSRGGRGGYSGGGGGGGGDPYRASAPPPRYYPSYPMGTADINASGWD.

Residues 9-31 form a disordered region; sequence KSVEAGGEPGGGGGGAWSTVSRS. The segment covering 15-24 has biased composition (gly residues); sequence GEPGGGGGGA. The short motif at 84-112 is the Q motif element; it reads DGFEAAGLVEAVLRNVARCGYESPTPVQR. The 191-residue stretch at 115–305 folds into the Helicase ATP-binding domain; that stretch reads MPIALAGRDL…SDFLSNYIFI (191 aa). 128–135 lines the ATP pocket; it reads AQTGSGKT. The short motif at 249–252 is the DEAD box element; it reads DEAD. One can recognise a Helicase C-terminal domain in the interval 328–485; sequence EKRGYLLDLL…DVPDWLVQYA (158 aa). 2 disordered regions span residues 492-521 and 552-602; these read GSSY…SGGG and RGGG…SGWD. The segment covering 552 to 574 has biased composition (gly residues); it reads RGGGYSRGGRGGYSGGGGGGGGD.

This sequence belongs to the DEAD box helicase family. DDX3/DED1 subfamily.

It catalyses the reaction ATP + H2O = ADP + phosphate + H(+). The sequence is that of DEAD-box ATP-dependent RNA helicase 52A from Oryza sativa subsp. japonica (Rice).